A 1415-amino-acid chain; its full sequence is MNQELTTNPFNPVAPVKTFDEIKVSLASPERILSWSFGEIKKPETINYRTFKPERDGLFCARIFGPIKDYECLCGKYKRMKYRGVICEKCGVEVTLQKVRRERMGHIELAAPVAHIWFLKSLPSRIGTMLDMTLRDLERILYFENYVVIEPGLTDLTYGQLMTEEEFLDAQDAYGMDAFTANIGAEAIREMLAAIDLETEAEQLRADLAEATGELKPKKIIKRLKLVENFLESGNRPEWMVLTVVPVIPPELRPLVPLDGGRFATSDLNDLYRRVINRNNRLKRLIELRAPDIIIRNEKRMLQESVDALFDNGRRGRVITGANKRPLKSLSDMLKGKQGRFRQNLLGKRVDFSGRSVIVTGPELKLHQCGLPKKMALELFKPFIYSRLEAKGLSSTVKQAKKLVEKERPEVWDILDEVIREHPVMLNRAPTLHRLGIQAFEPVLIEGKAIQLHPLVCSAFNADFDGDQMAVHVPLSLEAQLEARVLMMSTNNVLSPANGAPIIVPSQDMILGLYYITLEREGLPGQGMIFGSPEEVEHALTAGTVHLHSKIQARVKQIDDEGNEIYKRYETTPGRVRLGALLPLNAKAPFELVNRLLRKKEVQQVIDTVYRYCGQKESVIFCDQIMTLGFREAFKAGISFGKDDMLIPDTKWDIVEGVRDQVKEFEQQYMDGLITQGEKYNKVVDAWSKCSDEVASEMMDEISRDRFDPDTKEQMEPNSVYMMAHSGARGSPAQMKQLGGMRGLMAKPSGEIIETPIISNFKEGLTVLEYFNSTHGARKGLADTALKTANSGYLTRRLVDVAQDCIVRLNDCGTENAITAEAAVNDGEVVASLGERVLGRVAAEDVVDPASGEVIVAKGELIDERKADLIEQSSIQSMRMRSPLTCEADEGVCAQCYGRDLARGTKVNVGEAVGIIAAQSIGEPGTQLTMRTFHIGGIAQGGQQSFQEAGQEGKIAFRNANLLENTSGEKIVMGRNMQLLIVDGEGAERASFKLGYGTKVHVAEGDKVGRGDKLFEWDPYTLPIIAEKSGVVRFADLVSGISVREETDDATGMTQKIVSDWRAAPKGSDLKPEVLIADPETGEPVRNDAGNPVTYPMSVDAILSIEDGMPISAGDVVARIPREGAKTKDITGGLPRVAELFEARRPKDHAIIAEIDGYVRFGRDYKNKRRISIEPSDETMEPVEYMVPKGKHIPVAEGDFVQKGDYIMDGNPAPHDILRIMGIEALADYLINEVQDVYRLQGVKINDKHIEVIVRQMLQKWEILDSGETTLLKGEHVDKLQFEAVNEKAIAEGRRPAQGEPILLGITKASLQTRSFISAASFQETTKVLTEASTMGKRDKLIGLKENVIVGRLIPAGTGGATQQMRRIAQERDQKVIEQRQAEAEEAAALAAPMAEDVFEDGGDMADISMPESRD.

Residues cysteine 72, cysteine 74, cysteine 87, and cysteine 90 each coordinate Zn(2+). Mg(2+) is bound by residues aspartate 463, aspartate 465, and aspartate 467. Zn(2+) is bound by residues cysteine 812, cysteine 886, cysteine 893, and cysteine 896.

This sequence belongs to the RNA polymerase beta' chain family. The RNAP catalytic core consists of 2 alpha, 1 beta, 1 beta' and 1 omega subunit. When a sigma factor is associated with the core the holoenzyme is formed, which can initiate transcription. It depends on Mg(2+) as a cofactor. Requires Zn(2+) as cofactor.

It carries out the reaction RNA(n) + a ribonucleoside 5'-triphosphate = RNA(n+1) + diphosphate. DNA-dependent RNA polymerase catalyzes the transcription of DNA into RNA using the four ribonucleoside triphosphates as substrates. The protein is DNA-directed RNA polymerase subunit beta' of Dinoroseobacter shibae (strain DSM 16493 / NCIMB 14021 / DFL 12).